Reading from the N-terminus, the 332-residue chain is Ribosomal RNA small subunit methyltransferase C (332 aa).

Belongs to the methyltransferase superfamily. RsmC family. In terms of assembly, monomer.

Its subcellular location is the cytoplasm. The catalysed reaction is guanosine(1207) in 16S rRNA + S-adenosyl-L-methionine = N(2)-methylguanosine(1207) in 16S rRNA + S-adenosyl-L-homocysteine + H(+). In terms of biological role, specifically methylates the guanine in position 1207 of 16S rRNA in the 30S particle. This chain is Ribosomal RNA small subunit methyltransferase C, found in Pseudomonas putida (strain GB-1).